Consider the following 63-residue polypeptide: Small ribosomal subunit protein eS17 (63 aa).

This sequence belongs to the eukaryotic ribosomal protein eS17 family.

The sequence is that of Small ribosomal subunit protein eS17 from Methanococcus maripaludis (strain C7 / ATCC BAA-1331).